An 882-amino-acid chain; its full sequence is DNA mismatch repair protein MutS (882 aa).

Residue 626 to 633 participates in ATP binding; it reads GPNMAGKS.

This sequence belongs to the DNA mismatch repair MutS family.

This protein is involved in the repair of mismatches in DNA. It is possible that it carries out the mismatch recognition step. This protein has a weak ATPase activity. This is DNA mismatch repair protein MutS from Anaeromyxobacter sp. (strain Fw109-5).